We begin with the raw amino-acid sequence, 155 residues long: MHFLITNEVKKIFNDKLYSQRFKQITDLVSTKLNIDKKRFFECHFVDEKTIQEINKNYRNKDYITDVISFAFDDGEIITPLLGEMYICYQKVVDQASQFAHSFERELCFLFTHGLLHLLGYDHIKIEDEKIMFALQDEILNELKITRNINGARND.

His113, His117, and His123 together coordinate Zn(2+).

This sequence belongs to the endoribonuclease YbeY family. Zn(2+) is required as a cofactor.

The protein resides in the cytoplasm. Its function is as follows. Single strand-specific metallo-endoribonuclease involved in late-stage 70S ribosome quality control and in maturation of the 3' terminus of the 16S rRNA. The protein is Endoribonuclease YbeY of Ureaplasma parvum serovar 3 (strain ATCC 27815 / 27 / NCTC 11736).